Reading from the N-terminus, the 157-residue chain is Protein Smg (157 aa).

This sequence belongs to the Smg family.

This is Protein Smg from Buchnera aphidicola subsp. Acyrthosiphon pisum (strain Tuc7).